The primary structure comprises 174 residues: Adenylosuccinate synthetase (174 aa).

GTP contacts are provided by residues G13–K19 and G41–T43. D14 serves as the catalytic Proton acceptor. Positions 14 and 41 each coordinate Mg(2+). Residues D14–K17, N39–H42, T130, and R144 contribute to the IMP site. H42 serves as the catalytic Proton donor.

This sequence belongs to the adenylosuccinate synthetase family. Homodimer. The cofactor is Mg(2+).

Its subcellular location is the cytoplasm. The catalysed reaction is IMP + L-aspartate + GTP = N(6)-(1,2-dicarboxyethyl)-AMP + GDP + phosphate + 2 H(+). The protein operates within purine metabolism; AMP biosynthesis via de novo pathway; AMP from IMP: step 1/2. In terms of biological role, plays an important role in the de novo pathway of purine nucleotide biosynthesis. Catalyzes the first committed step in the biosynthesis of AMP from IMP. The protein is Adenylosuccinate synthetase of Stutzerimonas stutzeri (Pseudomonas stutzeri).